We begin with the raw amino-acid sequence, 487 residues long: Putative sugar kinase YoaC (487 aa).

This sequence belongs to the FGGY kinase family.

This is Putative sugar kinase YoaC (yoaC) from Bacillus subtilis (strain 168).